The chain runs to 1136 residues: Phytochrome (1136 aa).

Positions methionine 1–valine 28 are disordered. Residues histidine 11 to arginine 20 are compositionally biased toward low complexity. Residues aspartate 231–valine 414 enclose the GAF domain. Position 336 (cysteine 336) interacts with phytochromobilin. PAS domains lie at valine 629 to glutamate 699 and aspartate 762 to arginine 833. Residues tyrosine 913–glutamine 1132 form the Histidine kinase domain.

Belongs to the phytochrome family. Homodimer. Contains one covalently linked phytochromobilin chromophore.

Functionally, regulatory photoreceptor which exists in two forms that are reversibly interconvertible by light: the Pr form that absorbs maximally in the red region of the spectrum and the Pfr form that absorbs maximally in the far-red region. Photoconversion of Pr to Pfr induces an array of morphogenic responses, whereas reconversion of Pfr to Pr cancels the induction of those responses. Pfr controls the expression of a number of nuclear genes including those encoding the small subunit of ribulose-bisphosphate carboxylase, chlorophyll A/B binding protein, protochlorophyllide reductase, rRNA, etc. It also controls the expression of its own gene(s) in a negative feedback fashion. This Picea abies (Norway spruce) protein is Phytochrome.